The sequence spans 262 residues: Methanethiol S-methyltransferase (262 aa).

A run of 5 helical transmembrane segments spans residues 22-42 (LYSL…IGFV), 55-75 (PGAS…LFAV), 100-120 (ATYV…WQPI), 134-154 (AVLT…TFLI), and 195-215 (GFLM…VFAL).

It belongs to the nurim family.

It is found in the membrane. The enzyme catalyses methanethiol + S-adenosyl-L-methionine = dimethyl sulfide + S-adenosyl-L-homocysteine + H(+). In terms of biological role, catalyzes the methylation of methanethiol (MeSH) to yield dimethylsulphide (DMS). This chain is Methanethiol S-methyltransferase, found in Pseudomonas deceptionensis.